Reading from the N-terminus, the 228-residue chain is Elongation factor 1-beta 1 (228 aa).

Alanine 2 carries the N-acetylalanine modification. Positions 14–65 (LKTLEEHLAGKTYISGDQLSVDDVKVYAAVLENPGDGFPNASKWYDSVASHL) constitute a GST C-terminal domain. Positions 75-139 (GVRVGGGVAP…DTKKTKESGK (65 aa)) are disordered. Over residues 95–115 (PAADGDGDDDDDIDLFADETE) the composition is skewed to acidic residues. Positions 116-138 (DEKKAAEEREAAKKDTKKTKESG) are enriched in basic and acidic residues.

This sequence belongs to the EF-1-beta/EF-1-delta family. As to quaternary structure, EF-1 is composed of 4 subunits: alpha, beta (1B-alpha=beta'), delta (1B-beta), and gamma (1B-gamma).

It localises to the cell membrane. Its function is as follows. EF-1-beta and EF-1-delta stimulate the exchange of GDP bound to EF-1-alpha to GTP. This chain is Elongation factor 1-beta 1, found in Arabidopsis thaliana (Mouse-ear cress).